The primary structure comprises 228 residues: Urease accessory protein UreF (228 aa).

This sequence belongs to the UreF family. UreD, UreF and UreG form a complex that acts as a GTP-hydrolysis-dependent molecular chaperone, activating the urease apoprotein by helping to assemble the nickel containing metallocenter of UreC. The UreE protein probably delivers the nickel.

The protein localises to the cytoplasm. Required for maturation of urease via the functional incorporation of the urease nickel metallocenter. This is Urease accessory protein UreF from Prochlorococcus marinus (strain MIT 9312).